A 779-amino-acid chain; its full sequence is Transcription activator of gluconeogenesis BDCG_02812 (779 aa).

A disordered region spans residues 1–70 (MTASTRNGSP…NAKDPLRPRR (70 aa)). The span at 25–61 (KSMTTTPANPPETKSQTNGKGSGTAQSSQKPASTSAN) shows a compositional bias: polar residues. The zn(2)-C6 fungal-type DNA-binding region spans 77–105 (CFACQRAHLTCGDERPCQRCIKRGLQDAC). 6 disordered regions span residues 135–163 (QANT…QSVS), 202–239 (SVFH…SVSG), 285–344 (GAGD…ANPR), 401–421 (TNLM…PGLK), 559–590 (GSSL…PHTG), and 655–732 (FHGK…QTWG). The segment covering 202 to 226 (SVFHAQSPSSTQNFDLSSNPQTQNL) has biased composition (polar residues). Low complexity predominate over residues 227–238 (SSAMSQTASSVS). Polar residues-rich tracts occupy residues 291 to 322 (PSDS…NQSP), 333 to 344 (WNPTGQGQANPR), and 401 to 416 (TNLM…SRIS). Low complexity predominate over residues 560–572 (SSLSSASSVRGSS). Polar residues predominate over residues 573–586 (TFTPRNNNTHNSID). Positions 672–719 (TGTTTSGDVATTTATGTSTSNGANANTNGNNTNPNDPSSAASSSASSA) are enriched in low complexity. The segment covering 720–729 (LQGPQQSPRQ) has biased composition (polar residues).

This sequence belongs to the ERT1/acuK family.

The protein localises to the nucleus. Functionally, transcription factor which regulates nonfermentable carbon utilization. Activator of gluconeogenetic genes. This Ajellomyces dermatitidis (strain ER-3 / ATCC MYA-2586) (Blastomyces dermatitidis) protein is Transcription activator of gluconeogenesis BDCG_02812.